Here is a 513-residue protein sequence, read N- to C-terminus: MQLNAHEISDLIKKQIEGFDFDAEVRTEGSVVSVSDGIVRIHGLADVQFGEMLEFPNNTFGMALNLEQNSVGAVILGDYLHISEGDVVKCTNRLVEVPVGEAMLGRVVNPLGKAIDGKDDIDVQGARPLEIMAPGVINRKSVDQPIQTGIKAIDAMVPVGRGQRELIIGDRQTGKTAVAIDTIINQKDSGIRCVYVAIGQKDSSVAAVVRKLEEYGALENTIIVTAGAASAPALQYIAPYAGCTMAEYFRDRGEDALIVYDDLTKQAWAYREVSLLLKRPPGREAYPGDVFYLHSRLLERASRVNAEYVEKMTNGEVKGKTGSLTALPIIETQGGDVSAFVPTNVISITDGQIFLETDLFNAGIRPAINAGLSVSRVGGSAQTNIIKKLGGGIRLDLAQYRELAAFAQFSSDLDSETKAQIDRGQRVTELMKQNQYSPLSIAEMATSLFAVNSGLLDDIEVNKVVDFEAALIAYMNANQILLMSKINDTGDYNDKISNELQAAIDDFKQNHTW.

169–176 (GDRQTGKT) lines the ATP pocket.

The protein belongs to the ATPase alpha/beta chains family. As to quaternary structure, F-type ATPases have 2 components, CF(1) - the catalytic core - and CF(0) - the membrane proton channel. CF(1) has five subunits: alpha(3), beta(3), gamma(1), delta(1), epsilon(1). CF(0) has three main subunits: a(1), b(2) and c(9-12). The alpha and beta chains form an alternating ring which encloses part of the gamma chain. CF(1) is attached to CF(0) by a central stalk formed by the gamma and epsilon chains, while a peripheral stalk is formed by the delta and b chains.

The protein resides in the cell inner membrane. It catalyses the reaction ATP + H2O + 4 H(+)(in) = ADP + phosphate + 5 H(+)(out). Its function is as follows. Produces ATP from ADP in the presence of a proton gradient across the membrane. The alpha chain is a regulatory subunit. This Ruthia magnifica subsp. Calyptogena magnifica protein is ATP synthase subunit alpha.